Here is a 198-residue protein sequence, read N- to C-terminus: Putative peptidyl-prolyl cis-trans isomerase (198 aa).

A PPIase cyclophilin-type domain is found at 14–195 (NEIKVAMHTN…HDVVIESIDV (182 aa)).

This sequence belongs to the cyclophilin-type PPIase family.

The catalysed reaction is [protein]-peptidylproline (omega=180) = [protein]-peptidylproline (omega=0). In terms of biological role, PPIases accelerate the folding of proteins. It catalyzes the cis-trans isomerization of proline imidic peptide bonds in oligopeptides. This Staphylococcus haemolyticus (strain JCSC1435) protein is Putative peptidyl-prolyl cis-trans isomerase.